Reading from the N-terminus, the 108-residue chain is uncharacterized protein (108 aa).

An N-terminal signal peptide occupies residues 1–24 (MNLWEFRFGKSFLFIPNFIMKVLA).

It to M.jannaschii MJ0803.

This is an uncharacterized protein from Methanocaldococcus jannaschii (strain ATCC 43067 / DSM 2661 / JAL-1 / JCM 10045 / NBRC 100440) (Methanococcus jannaschii).